Consider the following 414-residue polypeptide: Cytosolic-abundant heat soluble protein 89226 (414 aa).

Composition is skewed to basic and acidic residues over residues 27–45 (IGED…DKRP) and 69–84 (AGQR…ERLR). Residues 27–155 (IGEDRGKEDP…SNPGMNNGMT (129 aa)) form a disordered region. Composition is skewed to low complexity over residues 86-101 (SRSS…VEPS) and 120-134 (SSNR…SSSD). Positions 142-155 (ASRNSNPGMNNGMT) are enriched in polar residues. 2 CAHS motif regions span residues 305-323 (YRNA…LERQ) and 342-360 (QQQE…LEQE). The stretch at 341–376 (RQQQEIRLEAEYAMRALEQERVNARAALDQAMASTN) forms a coiled coil. Residues 388-405 (THSQGRVTTTSESRTSQA) show a composition bias toward polar residues. Residues 388–414 (THSQGRVTTTSESRTSQARGPATAAVI) form a disordered region.

Belongs to the Cytosolic-abundant heat soluble protein (CAHS) family.

It is found in the cytoplasm. CAHS proteins are cytosolic heat soluble proteins that seem to contribute to the anhydrobiosis in tardigrades, but their specific mechanisms are yet to be identified. It is possible that protection during anhydrobiosis might occur via the stabilization of vitrifying small molecules such as sugars, but not via the direct glass transition of CAHS proteins themselves. This is Cytosolic-abundant heat soluble protein 89226 from Hypsibius exemplaris (Freshwater tardigrade).